Reading from the N-terminus, the 339-residue chain is Heat-inducible transcription repressor HrcA (339 aa).

It belongs to the HrcA family.

In terms of biological role, negative regulator of class I heat shock genes (grpE-dnaK-dnaJ and groELS operons). Prevents heat-shock induction of these operons. The chain is Heat-inducible transcription repressor HrcA from Leifsonia xyli subsp. xyli (strain CTCB07).